The following is a 416-amino-acid chain: Isocitrate dehydrogenase [NADP] (416 aa).

NADP(+)-binding positions include 77 to 79 (TIT) and Arg-84. Substrate is bound at residue Thr-79. Residues 96-102 (SPNGTIR), Arg-111, and Arg-134 each bind substrate. Position 254 (Asp-254) interacts with Mn(2+). Residue Lys-262 participates in NADP(+) binding. Residue Asp-277 coordinates Mn(2+). NADP(+) contacts are provided by residues 312 to 317 (GTVTRH) and Asn-330.

It belongs to the isocitrate and isopropylmalate dehydrogenases family. Heterodimer. It depends on Mg(2+) as a cofactor. The cofactor is Mn(2+).

Its subcellular location is the cytoplasm. It carries out the reaction D-threo-isocitrate + NADP(+) = 2-oxoglutarate + CO2 + NADPH. May supply 2-oxoglutarate for amino acid biosynthesis and ammonia assimilation via the glutamine synthetase/glutamate synthase (GS/GOGAT) pathway. The sequence is that of Isocitrate dehydrogenase [NADP] (ICDH-1) from Solanum tuberosum (Potato).